Here is a 178-residue protein sequence, read N- to C-terminus: MSRVGKKIIDIPSDVTVTFDGSHVTVKGPKGELERTLNERMTFKQEENTVEVVRPSDSKEDRTDHGTTRALLNNMVLGVSQGYEKTLELVGVGYRAQMQGKDLVLNVGYSHPVEIKAEEGITFAVEKNTTVKVSGVSKEQVGAIASNIRSVRPPEPYKGKGIRYQGEYVRRKEGKTGK.

The protein belongs to the universal ribosomal protein uL6 family. As to quaternary structure, part of the 50S ribosomal subunit.

In terms of biological role, this protein binds to the 23S rRNA, and is important in its secondary structure. It is located near the subunit interface in the base of the L7/L12 stalk, and near the tRNA binding site of the peptidyltransferase center. In Staphylococcus epidermidis (strain ATCC 35984 / DSM 28319 / BCRC 17069 / CCUG 31568 / BM 3577 / RP62A), this protein is Large ribosomal subunit protein uL6.